Reading from the N-terminus, the 506-residue chain is Glycerol kinase (506 aa).

T11 is a binding site for ADP. 3 residues coordinate ATP: T11, S12, and S13. T11 contributes to the sn-glycerol 3-phosphate binding site. R15 is a binding site for ADP. Residues R81, E82, Y133, and D242 each contribute to the sn-glycerol 3-phosphate site. R81, E82, Y133, D242, and Q243 together coordinate glycerol. Residues T264 and G316 each contribute to the ADP site. 4 residues coordinate ATP: T264, G316, Q320, and G421. G421 and N425 together coordinate ADP.

Belongs to the FGGY kinase family.

The catalysed reaction is glycerol + ATP = sn-glycerol 3-phosphate + ADP + H(+). Its pathway is polyol metabolism; glycerol degradation via glycerol kinase pathway; sn-glycerol 3-phosphate from glycerol: step 1/1. With respect to regulation, inhibited by fructose 1,6-bisphosphate (FBP). Functionally, key enzyme in the regulation of glycerol uptake and metabolism. Catalyzes the phosphorylation of glycerol to yield sn-glycerol 3-phosphate. The sequence is that of Glycerol kinase from Paracidovorax citrulli (strain AAC00-1) (Acidovorax citrulli).